Here is a 349-residue protein sequence, read N- to C-terminus: Interferon-stimulated 20 kDa exonuclease-like 2 (349 aa).

Disordered regions lie at residues 1 to 100 (MSTL…AAVP) and 126 to 166 (ALPK…KYSG). The span at 14–23 (PPKKALEGNA) shows a compositional bias: basic and acidic residues. Residues 24-47 (KHRKFVKKRRLLERKGFLNKKKQP) show a composition bias toward basic residues. Over residues 54-66 (LHSEPSQKGETPR) the composition is skewed to basic and acidic residues. A compositionally biased stretch (low complexity) spans 70–87 (TWKATPLPKKKTTAASSS). Residues 130-142 (IKSHPTRPQKKGS) show a composition bias toward basic residues. Residues 175–331 (MVAIDCEMVG…EDAQATMELY (157 aa)) form the Exonuclease domain.

Its subcellular location is the nucleus. It localises to the nucleolus. In terms of biological role, 3'-&gt; 5'-exoribonuclease involved in ribosome biogenesis in the processing of the 12S pre-rRNA. Displays a strong specificity for a 3'-end containing a free hydroxyl group. This chain is Interferon-stimulated 20 kDa exonuclease-like 2 (ISG20L2), found in Bos taurus (Bovine).